A 380-amino-acid polypeptide reads, in one-letter code: Cytochrome b (380 aa).

A run of 4 helical transmembrane segments spans residues 33-53 (FGSLLGLCLISQILTGLFLAM), 77-98 (WLIRNLHANGASFFFICIYFHI), 113-133 (WNIGVVLLLLVMMTAFVGYVL), and 178-198 (FFAFHFLFPFVILAMTILHLL). Positions 83 and 97 each coordinate heme b. Positions 182 and 196 each coordinate heme b. His201 is a binding site for a ubiquinone. Transmembrane regions (helical) follow at residues 226–246 (YKDLLGFAILLVALASLALFS), 288–308 (LGGVLALLASILVLMVVPFLH), 320–340 (VSQFLFWTLIADVAILTWIGG), and 347–367 (FIIIGQVASVLYFSLFLVFFP).

The protein belongs to the cytochrome b family. In terms of assembly, the cytochrome bc1 complex contains 3 respiratory subunits (MT-CYB, CYC1 and UQCRFS1), 2 core proteins (UQCRC1 and UQCRC2) and probably 6 low-molecular weight proteins. It depends on heme b as a cofactor.

It localises to the mitochondrion inner membrane. Component of the ubiquinol-cytochrome c reductase complex (complex III or cytochrome b-c1 complex) that is part of the mitochondrial respiratory chain. The b-c1 complex mediates electron transfer from ubiquinol to cytochrome c. Contributes to the generation of a proton gradient across the mitochondrial membrane that is then used for ATP synthesis. The sequence is that of Cytochrome b (mt-cyb) from Sarda sarda (Atlantic bonito).